Here is a 1085-residue protein sequence, read N- to C-terminus: Carbamoyl phosphate synthase large chain (1085 aa).

The segment at 1–399 is carboxyphosphate synthetic domain; the sequence is MPKRTDISNI…ALQKALCSLE (399 aa). 11 residues coordinate ATP: Arg127, Arg167, Gly174, Glu206, Leu208, Glu213, Gly239, Val240, His241, Gln283, and Glu297. In terms of domain architecture, ATP-grasp 1 spans 131–326; that stretch reads KEAMLKIGMD…IAKVATMLAV (196 aa). Residues Gln283, Glu297, and Asn299 each contribute to the Mg(2+) site. Mn(2+)-binding residues include Gln283, Glu297, and Asn299. The segment at 400–551 is oligomerization domain; it reads NNWLGFESLS…YAPNPLPPIG (152 aa). The carbamoyl phosphate synthetic domain stretch occupies residues 552–951; it reads NKQEKQEKKI…AFFKAQTACF (400 aa). The ATP-grasp 2 domain maps to 678 to 871; sequence SLFLKELDIK…LAKVATRVMV (194 aa). The ATP site is built by Arg714, Lys756, Leu758, Glu763, Gly788, Ile789, His790, Ser791, Gln830, and Glu842. Residues Gln830, Glu842, and Asn844 each coordinate Mg(2+). 3 residues coordinate Mn(2+): Gln830, Glu842, and Asn844. One can recognise an MGS-like domain in the interval 952–1085; it reads NPIKNKGLIF…ELLALQDYLK (134 aa). The allosteric domain stretch occupies residues 952–1085; that stretch reads NPIKNKGLIF…ELLALQDYLK (134 aa).

The protein belongs to the CarB family. As to quaternary structure, composed of two chains; the small (or glutamine) chain promotes the hydrolysis of glutamine to ammonia, which is used by the large (or ammonia) chain to synthesize carbamoyl phosphate. Tetramer of heterodimers (alpha,beta)4. Mg(2+) serves as cofactor. Mn(2+) is required as a cofactor.

It catalyses the reaction hydrogencarbonate + L-glutamine + 2 ATP + H2O = carbamoyl phosphate + L-glutamate + 2 ADP + phosphate + 2 H(+). The catalysed reaction is hydrogencarbonate + NH4(+) + 2 ATP = carbamoyl phosphate + 2 ADP + phosphate + 2 H(+). It participates in amino-acid biosynthesis; L-arginine biosynthesis; carbamoyl phosphate from bicarbonate: step 1/1. Its pathway is pyrimidine metabolism; UMP biosynthesis via de novo pathway; (S)-dihydroorotate from bicarbonate: step 1/3. Its function is as follows. Large subunit of the glutamine-dependent carbamoyl phosphate synthetase (CPSase). CPSase catalyzes the formation of carbamoyl phosphate from the ammonia moiety of glutamine, carbonate, and phosphate donated by ATP, constituting the first step of 2 biosynthetic pathways, one leading to arginine and/or urea and the other to pyrimidine nucleotides. The large subunit (synthetase) binds the substrates ammonia (free or transferred from glutamine from the small subunit), hydrogencarbonate and ATP and carries out an ATP-coupled ligase reaction, activating hydrogencarbonate by forming carboxy phosphate which reacts with ammonia to form carbamoyl phosphate. This chain is Carbamoyl phosphate synthase large chain, found in Helicobacter pylori (strain J99 / ATCC 700824) (Campylobacter pylori J99).